The chain runs to 405 residues: MPGIAIVGAQWGDEGKGKITDFLAPEAEFVVRYQGGANAGHTVTAKGQTFKLNLLPSGVLHEGTVSVLGDGMVIDADKFMEERRNLIAGGLNPELRISDRAHLVLPHHKYVDGRKDFVGTTGRGIGPAYADRARRVGVRFGDLSDDTVLRERLERLLEAKPNSTRDAGWTSVDVAMESLAPIREALLPFVQDTGSQLRAAITEGRNVLFEGAQATLLDLNYGTYPFVTSSHPTVGGILVGAGVNHKAIHKVYGVAKAFNTRVGHGPFVTEVLGDAEILRLRGDGSKPWDEFGTTTGRARRVGWLDLHLLKYAVEVNGLDGLVINKMDILSGMDSIPVCVSYDAAGEPVYKHMKGWATTDGADSRASLPREAQAYLDLIEETVGCPVVIFSAGPAREQTYGSVSWT.

GTP-binding positions include 12 to 18 (GDEGKGK) and 40 to 42 (GHT). Asp13 serves as the catalytic Proton acceptor. Positions 13 and 40 each coordinate Mg(2+). IMP is bound by residues 13–16 (DEGK), 38–41 (NAGH), Thr121, Arg135, Gln213, Thr228, and Arg297. The active-site Proton donor is the His41. 293–299 (TTTGRAR) provides a ligand contact to substrate. GTP-binding positions include Arg299, 325 to 327 (KMD), and 390 to 392 (SAG).

Belongs to the adenylosuccinate synthetase family. As to quaternary structure, homodimer. Mg(2+) is required as a cofactor.

It is found in the cytoplasm. The enzyme catalyses IMP + L-aspartate + GTP = N(6)-(1,2-dicarboxyethyl)-AMP + GDP + phosphate + 2 H(+). It participates in purine metabolism; AMP biosynthesis via de novo pathway; AMP from IMP: step 1/2. Plays an important role in the de novo pathway of purine nucleotide biosynthesis. Catalyzes the first committed step in the biosynthesis of AMP from IMP. This is Adenylosuccinate synthetase from Deinococcus deserti (strain DSM 17065 / CIP 109153 / LMG 22923 / VCD115).